The primary structure comprises 223 residues: uncharacterized protein (223 aa).

The interval 40-70 is disordered; the sequence is GSKRLKPAKFGTEGKERVEQRTERQRTGSSK. The span at 51–70 shows a compositional bias: basic and acidic residues; the sequence is TEGKERVEQRTERQRTGSSK.

This is an uncharacterized protein from Homo sapiens (Human).